A 303-amino-acid polypeptide reads, in one-letter code: MYYGFDIGGTKIALGVFDSTRRLQWEKRVPTPHASYGAFLDAVCELVAEADQRFGVKGSVGIGIPGMPETEDGTLYAANVPAASGKPLRADLSARLDRDVRLDNDANCFALSEAWDDEFTQYPLVMGLILGTGVGGGLVLNGKPITGQSYITGEFGHMRLPVDALTLMGFDFPLRRCGCGQMGCIENYLSGRGFAWLYQHYYHQSLQAPEIIALWEQGDEQAHAHVERYLDLLAVCLGNILTIVDPDLLVIGGGLSNFTAITTQLAERLPRHLLPVARAPRIERARHGDAGGMRGAAFLHLTD.

ATP contacts are provided by residues 4 to 11 and 133 to 140; these read GFDIGGTK and GVGGGLVL. Zn(2+) contacts are provided by His157, Cys177, Cys179, and Cys184.

The protein belongs to the ROK (NagC/XylR) family. NagK subfamily.

The enzyme catalyses N-acetyl-D-glucosamine + ATP = N-acetyl-D-glucosamine 6-phosphate + ADP + H(+). Its pathway is cell wall biogenesis; peptidoglycan recycling. Catalyzes the phosphorylation of N-acetyl-D-glucosamine (GlcNAc) derived from cell-wall degradation, yielding GlcNAc-6-P. The chain is N-acetyl-D-glucosamine kinase from Salmonella paratyphi A (strain ATCC 9150 / SARB42).